A 701-amino-acid polypeptide reads, in one-letter code: MADLLFEIGAEEIPAGFVPGALRQLEDDLSKALADARLAHGEVRSVGTPRRLAVWARDVAPKQTDARTEAFGPPVAQAYDAEGKPTPAATGFARSQGVEVSALVRAQTPKGERVAVTKVEKGRRAEQVLPALLERLVGGLRFRKAMRSRFDEATFARPVRWMVALLGGRPLKVRHGEVTSGKVTYGHRFLAPKAIALKGTPDDYLAKLRRAHVLADPVERRAALLAELARAGKEAAGKVRDDPALVEQVLYLVEEPTAVVGEFEKSNLELPPEVVISEMRNHQRYFAVVDGKGRLKNRFVAVSATRVKDPAVARHGYERVLRARLADARFFFEEDRKRRLHERIEDLGRRTFQAKLGSELDRAQRIGAVASALARALGKDALVADLLEASRLAKVDLNTGMVGEFPELQGTMGAHYARLEGLKPEIADAIEDHYKPIGAAEELPRSDLGALVAVADRLHSLVGIIGVGEKATGAADPFGLRRSAIGILRIVIARGYHLSLAAAVEQTLDALSGVKLAAGRAVVAEQVLDFLRGRVRAAWTERFDADLVEAVLAAGSDDVVDARRRLEALADAKARPDFGSLAVAFKRVANIQEKAGGSGAAAVDPALLRDAAEKDLLAALEKVEQEVVARRAARDYPAVLRTVATLEPAVARFFDGVLVMAEDPALRANRLGLMRRVAALFSDLADFRKIQAEAPAQARAG.

This sequence belongs to the class-II aminoacyl-tRNA synthetase family. In terms of assembly, tetramer of two alpha and two beta subunits.

It is found in the cytoplasm. It catalyses the reaction tRNA(Gly) + glycine + ATP = glycyl-tRNA(Gly) + AMP + diphosphate. The polypeptide is Glycine--tRNA ligase beta subunit (Anaeromyxobacter dehalogenans (strain 2CP-1 / ATCC BAA-258)).